Consider the following 276-residue polypeptide: NADPH-dependent 7-cyano-7-deazaguanine reductase (276 aa).

Ile-80–Ser-82 provides a ligand contact to substrate. Ser-82–Lys-83 contributes to the NADPH binding site. Cys-178 (thioimide intermediate) is an active-site residue. Residue Asp-185 is the Proton donor of the active site. His-217 to Glu-218 is a substrate binding site. Arg-246–Gly-247 lines the NADPH pocket.

It belongs to the GTP cyclohydrolase I family. QueF type 2 subfamily. Homodimer.

It localises to the cytoplasm. The enzyme catalyses 7-aminomethyl-7-carbaguanine + 2 NADP(+) = 7-cyano-7-deazaguanine + 2 NADPH + 3 H(+). Its pathway is tRNA modification; tRNA-queuosine biosynthesis. In terms of biological role, catalyzes the NADPH-dependent reduction of 7-cyano-7-deazaguanine (preQ0) to 7-aminomethyl-7-deazaguanine (preQ1). This chain is NADPH-dependent 7-cyano-7-deazaguanine reductase, found in Teredinibacter turnerae (strain ATCC 39867 / T7901).